The chain runs to 170 residues: Crossover junction endodeoxyribonuclease RuvC (170 aa).

Catalysis depends on residues Asp9, Glu70, and Asp145. Mg(2+) contacts are provided by Asp9, Glu70, and Asp145.

It belongs to the RuvC family. As to quaternary structure, homodimer which binds Holliday junction (HJ) DNA. The HJ becomes 2-fold symmetrical on binding to RuvC with unstacked arms; it has a different conformation from HJ DNA in complex with RuvA. In the full resolvosome a probable DNA-RuvA(4)-RuvB(12)-RuvC(2) complex forms which resolves the HJ. Mg(2+) serves as cofactor.

It localises to the cytoplasm. The enzyme catalyses Endonucleolytic cleavage at a junction such as a reciprocal single-stranded crossover between two homologous DNA duplexes (Holliday junction).. Functionally, the RuvA-RuvB-RuvC complex processes Holliday junction (HJ) DNA during genetic recombination and DNA repair. Endonuclease that resolves HJ intermediates. Cleaves cruciform DNA by making single-stranded nicks across the HJ at symmetrical positions within the homologous arms, yielding a 5'-phosphate and a 3'-hydroxyl group; requires a central core of homology in the junction. The consensus cleavage sequence is 5'-(A/T)TT(C/G)-3'. Cleavage occurs on the 3'-side of the TT dinucleotide at the point of strand exchange. HJ branch migration catalyzed by RuvA-RuvB allows RuvC to scan DNA until it finds its consensus sequence, where it cleaves and resolves the cruciform DNA. In Chlamydia trachomatis serovar A (strain ATCC VR-571B / DSM 19440 / HAR-13), this protein is Crossover junction endodeoxyribonuclease RuvC.